A 317-amino-acid chain; its full sequence is MNTWNELTVHVNREAEEAVSNLLIETGSQGVAISDSADYLGQEDRFGELYPEVEQSDMIAITAYYPDTLDIEAVKADLADRLANFEGFGLATGSVNLDSQELVEEDWADNWKKYYEPARITHDLTIVPSWTDYEAKAGEKIIKMDPGMAFGTGTHPTTKMSLFALEQVLRGGETVIDVGTGSGVLSIASSLLGAKDIYAYDLDDVAVRVAQENIDMNPGTENIHVAAGDLLKGVQQEVDVIVANILADILIHLTDDAYRLVKDEGYLIMSGIISEKWDMVRESAEKAGFFLETHMVQGEWNACVFKKTDDISGVIGG.

S-adenosyl-L-methionine contacts are provided by threonine 158, glycine 179, aspartate 201, and asparagine 244.

This sequence belongs to the methyltransferase superfamily. PrmA family.

It localises to the cytoplasm. The enzyme catalyses L-lysyl-[protein] + 3 S-adenosyl-L-methionine = N(6),N(6),N(6)-trimethyl-L-lysyl-[protein] + 3 S-adenosyl-L-homocysteine + 3 H(+). Its function is as follows. Methylates ribosomal protein L11. The protein is Ribosomal protein L11 methyltransferase of Streptococcus agalactiae serotype III (strain NEM316).